A 475-amino-acid chain; its full sequence is Ribulose bisphosphate carboxylase large chain (475 aa).

A propeptide spanning residues 1-2 (MS) is cleaved from the precursor. P3 carries the N-acetylproline modification. The residue at position 14 (K14) is an N6,N6,N6-trimethyllysine. N123 and T173 together coordinate substrate. K175 (proton acceptor) is an active-site residue. A substrate-binding site is contributed by K177. 3 residues coordinate Mg(2+): K201, D203, and E204. K201 carries the N6-carboxylysine modification. Catalysis depends on H294, which acts as the Proton acceptor. Residues R295, H327, and S379 each coordinate substrate.

This sequence belongs to the RuBisCO large chain family. Type I subfamily. As to quaternary structure, heterohexadecamer of 8 large chains and 8 small chains; disulfide-linked. The disulfide link is formed within the large subunit homodimers. Requires Mg(2+) as cofactor. The disulfide bond which can form in the large chain dimeric partners within the hexadecamer appears to be associated with oxidative stress and protein turnover.

The protein resides in the plastid. It localises to the chloroplast. It catalyses the reaction 2 (2R)-3-phosphoglycerate + 2 H(+) = D-ribulose 1,5-bisphosphate + CO2 + H2O. It carries out the reaction D-ribulose 1,5-bisphosphate + O2 = 2-phosphoglycolate + (2R)-3-phosphoglycerate + 2 H(+). In terms of biological role, ruBisCO catalyzes two reactions: the carboxylation of D-ribulose 1,5-bisphosphate, the primary event in carbon dioxide fixation, as well as the oxidative fragmentation of the pentose substrate in the photorespiration process. Both reactions occur simultaneously and in competition at the same active site. This chain is Ribulose bisphosphate carboxylase large chain, found in Keteleeria davidiana (David's keteleeria).